A 160-amino-acid polypeptide reads, in one-letter code: Cyclic pyranopterin monophosphate synthase (160 aa).

Residues 75–77 (LCH) and 113–114 (ME) contribute to the substrate site. D128 is an active-site residue.

The protein belongs to the MoaC family. In terms of assembly, homohexamer; trimer of dimers.

The enzyme catalyses (8S)-3',8-cyclo-7,8-dihydroguanosine 5'-triphosphate = cyclic pyranopterin phosphate + diphosphate. It participates in cofactor biosynthesis; molybdopterin biosynthesis. Its function is as follows. Catalyzes the conversion of (8S)-3',8-cyclo-7,8-dihydroguanosine 5'-triphosphate to cyclic pyranopterin monophosphate (cPMP). In Methylobacterium nodulans (strain LMG 21967 / CNCM I-2342 / ORS 2060), this protein is Cyclic pyranopterin monophosphate synthase.